A 468-amino-acid chain; its full sequence is Pancreatic lipase-related protein 2 (468 aa).

The signal sequence occupies residues M1 to G16. C20 and C26 form a disulfide bridge. The required for galactolipase activity stretch occupies residues V92–L104. C108 and C119 are joined by a disulfide. The Nucleophile role is filled by S170. D194 (charge relay system) is an active-site residue. 4 residues coordinate Ca(2+): E205, R208, D210, and D213. C255 and C279 form a disulfide bridge. Positions Q256–A278 are required for galactolipase activity. The active-site Charge relay system is the H281. Disulfide bonds link C303/C314 and C317/C322. 2 N-linked (GlcNAc...) asparagine glycosylation sites follow: N352 and N427. One can recognise a PLAT domain in the interval W356–C468. C452 and C468 form a disulfide bridge.

Belongs to the AB hydrolase superfamily. Lipase family. Expressed in pancreatic acinar cells (at protein level).

The protein localises to the secreted. The protein resides in the zymogen granule membrane. It is found in the cell projection. Its subcellular location is the neuron projection. It catalyses the reaction a triacylglycerol + H2O = a diacylglycerol + a fatty acid + H(+). The enzyme catalyses a 1,2-diacyl-3-O-(beta-D-galactosyl)-sn-glycerol + 2 H2O = 3-beta-D-galactosyl-sn-glycerol + 2 a fatty acid + 2 H(+). The catalysed reaction is 1,2,3-tri-(9Z-octadecenoyl)-glycerol + H2O = di-(9Z)-octadecenoylglycerol + (9Z)-octadecenoate + H(+). It carries out the reaction di-(9Z)-octadecenoylglycerol + H2O = (9Z-octadecenoyl)-glycerol + (9Z)-octadecenoate + H(+). It catalyses the reaction (9Z-octadecenoyl)-glycerol + H2O = glycerol + (9Z)-octadecenoate + H(+). The enzyme catalyses 1-(9Z-octadecenoyl)-glycerol + H2O = glycerol + (9Z)-octadecenoate + H(+). The catalysed reaction is 1,2,3-tripropanoylglycerol + H2O = dipropanoylglycerol + propanoate + H(+). It carries out the reaction 1,2,3-tributanoylglycerol + H2O = dibutanoylglycerol + butanoate + H(+). It catalyses the reaction 1,2,3-trioctanoylglycerol + H2O = dioctanoylglycerol + octanoate + H(+). The enzyme catalyses 1,2-didecanoylglycerol + H2O = decanoylglycerol + decanoate + H(+). The catalysed reaction is long chain 1,2-diacyl-3-O-beta-D-galactosyl-sn-glycerol + H2O = long chain acyl-3-O-beta-D-galactosyl-sn-glycerol + a fatty acid + H(+). It carries out the reaction 1,2-dioctanoyl-3-O-beta-D-galactosyl-sn-glycerol + H2O = octanoyl-3-(beta-D-galactosyl)-sn-glycerol + octanoate + H(+). It catalyses the reaction 1,2-didodecanoyl-3-beta-D-galactosyl-sn-glycerol + H2O = dodecanoyl-3-beta-D-galactosyl-sn-glycerol + dodecanoate + H(+). The enzyme catalyses 1-beta-D-galactosyl-2,3-didodecanoyl-sn-glycerol + H2O = 1-beta-D-galactosyl-dodecanoyl-sn-glycerol + dodecanoate + H(+). The catalysed reaction is a 1,2-diacyl-3-O-[alpha-D-galactosyl-(1-&gt;6)-beta-D-galactosyl]-sn-glycerol + H2O = acyl-3-O-[alpha-D-galactosyl-(1-&gt;6)-beta-D-galactosyl]-sn-glycerol + a fatty acid + H(+). It carries out the reaction long chain 1,2-diacyl-3-O-[alpha-D-galactosyl-(1-&gt;6)-beta-D-galactosyl]-sn-glycerol + H2O = long chain acyl-3-O-[alpha-D-galactosyl-(1-&gt;6)-beta-D-galactosyl]-sn-glycerol + a fatty acid + H(+). It catalyses the reaction 1,2-dioctanoyl-3-O-[alpha-D-galactosyl-(1-&gt;6)-beta-D-galactosyl]-sn-glycerol + H2O = octanoyl-3-O-[alpha-D-galactosyl-(1-&gt;6)-beta-D-galactosyl]-sn-glycerol + octanoate + H(+). The enzyme catalyses 1,2-didodecanoyl-3-O-[alpha-D-galactosyl-(1-&gt;6)-beta-D-galactosyl]-sn-glycerol + H2O = dodecanoyl-3-O-[alpha-D-galactosyl-(1-&gt;6)-beta-D-galactosyl]-sn-glycerol + dodecanoate + H(+). The catalysed reaction is a 1,2-diacyl-sn-glycero-3-phosphocholine + H2O = a monoacyl-sn-glycero-3-phosphocholine + a fatty acid + H(+). It functions in the pathway glycerolipid metabolism; triacylglycerol degradation. It participates in glycolipid metabolism. Its activity is regulated as follows. CLPS stimulates triacylglycerol lipase activity. Triacylglycerol lipase activity is not inhibited by increasing bile salt concentration. Lipase that primarily hydrolyzes triglycerides and galactosylglycerides. In neonates, may play a major role in pancreatic digestion of dietary fats such as milk fat globules enriched in long-chain triglycerides. Hydrolyzes short-, medium- and long-chain fatty acyls in triglycerides without apparent positional specificity. Can completely deacylate triacylglycerols. When the liver matures and bile salt synthesis increases, likely functions mainly as a galactolipase and monoacylglycerol lipase. Hydrolyzes monogalactosyldiglycerols (MGDG) and digalactosyldiacylglycerols (DGDG) present in a plant-based diet, releasing long-chain polyunsaturated fatty acids. Hydrolyzes medium- and long-chain fatty acyls in galactolipids. May act together with LIPF to hydrolyze partially digested triglycerides. Hydrolyzes long-chain monoglycerides with high efficiency. In cytotoxic T cells, contributes to perforin-dependent cell lysis, but is unlikely to mediate direct cytotoxicity. Also has low phospholipase activity. In neurons, required for the localization of the phospholipid 1-oleoyl-2-palmitoyl-PC (OPPC) to neurite tips through acyl chain remodeling of membrane phospholipids. The resulting OPPC-rich lipid membrane domain recruits the t-SNARE protein STX4 by selectively interacting with the STX4 transmembrane domain and this promotes surface expression of the dopamine transporter SLC6A3/DAT at neurite tips by facilitating fusion of SLC6A3-containing transport vesicles with the plasma membrane. The sequence is that of Pancreatic lipase-related protein 2 from Rattus norvegicus (Rat).